A 711-amino-acid polypeptide reads, in one-letter code: Ribosomal RNA large subunit methyltransferase K/L (711 aa).

In terms of domain architecture, THUMP spans 43-154 (LAYRITLWSR…RGQITLGINF (112 aa)).

Belongs to the methyltransferase superfamily. RlmKL family.

The protein resides in the cytoplasm. The enzyme catalyses guanosine(2445) in 23S rRNA + S-adenosyl-L-methionine = N(2)-methylguanosine(2445) in 23S rRNA + S-adenosyl-L-homocysteine + H(+). It catalyses the reaction guanosine(2069) in 23S rRNA + S-adenosyl-L-methionine = N(2)-methylguanosine(2069) in 23S rRNA + S-adenosyl-L-homocysteine + H(+). Functionally, specifically methylates the guanine in position 2445 (m2G2445) and the guanine in position 2069 (m7G2069) of 23S rRNA. The polypeptide is Ribosomal RNA large subunit methyltransferase K/L (Shewanella loihica (strain ATCC BAA-1088 / PV-4)).